The sequence spans 405 residues: MALQAASLVSSAFSVRKDGKLNASASSSFKESSLFGVSLSEQSKADFVSSSLRCKREQSLRNNKAIIRAQAIATSTPSVTKSSLDRKKTLRKGNVVVTGASSGLGLATAKALAETGKWHVIMACRDFLKAERAAQSAGMPKDSYTVMHLDLASLDSVRQFVDNFRRAEMPLDVLVCNAAVYQPTANQPTFTAEGFELSVGINHLGHFLLSRLLIDDLKNSDYPSKRLIIVGSITGNTNTLAGNVPPKANLGDLRGLAGGLNGLNSSAMIDGGDFVGAKAYKDSKVCNMLTMQEFHRRFHEDTGITFASLYPGCIATTGLFREHIPLFRTLFPPFQKYITKGYVSESEAGKRLAQVVADPSLTKSGVYWSWNKTSASFENQLSQEASDVEKARRVWEVSEKLVGLA.

The transit peptide at 1–69 (MALQAASLVS…LRNNKAIIRA (69 aa)) directs the protein to the chloroplast.

It belongs to the short-chain dehydrogenases/reductases (SDR) family. POR subfamily. In terms of assembly, forms large complexes including TOC33, pPORA and OEP161 during pPORA import into plastids at the plastid envelope membrane. Interacts with CPP1 during plastid import. Expressed in young seedlings. Not detected in leaves.

The protein resides in the plastid. The protein localises to the chloroplast. It catalyses the reaction chlorophyllide a + NADP(+) = protochlorophyllide a + NADPH + H(+). The protein operates within porphyrin-containing compound metabolism; chlorophyll biosynthesis. Phototransformation of protochlorophyllide (Pchlide) to chlorophyllide (Chlide). PORA may also function as a photoprotectant during the transitory stage from dark to light. Functions in skotomorphogenesis, photomorphogenesis and throughout the plant life under specific light conditions. The chain is Protochlorophyllide reductase A, chloroplastic (PORA) from Arabidopsis thaliana (Mouse-ear cress).